Consider the following 1610-residue polypeptide: E3 ubiquitin-protein ligase listerin (1610 aa).

The segment covering 1-10 has biased composition (basic and acidic residues); that stretch reads MKKKSTDLYG. The interval 1-20 is disordered; sequence MKKKSTDLYGRKNPGMQSMS. HEAT repeat units lie at residues 110 to 148, 314 to 351, 372 to 408, 409 to 443, 590 to 626, 627 to 664, 736 to 773, 965 to 1003, 1119 to 1156, 1322 to 1354, 1355 to 1393, and 1435 to 1473; these read LKIF…SDRA, VPML…NLIT, IGAM…EVYD, CLLN…RYFK, SPAF…SFDE, LENI…TAVF, KSLY…KALE, GKMP…VVSN, CCFL…MSVV, RVYL…HAMD, LLRP…YSSA, and FTGY…KVNR. An RING-type; atypical zinc finger spans residues 1558 to 1604; the sequence is CAICYSVLSVERTLPNKRCGTCRHKFHASCLYKWFKSSNSSRCPLCR.

This sequence belongs to the LTN1 family. Component of the ribosome quality control complex (RQC), composed of the E3 ubiquitin ligase rkr1/ltn1, rqc1 and mtr1/rqc2, as well as cdc48 and its ubiquitin-binding cofactors. RQC forms a stable complex with 60S ribosomal subunits.

It is found in the nucleus. The protein resides in the cytoplasm. Its subcellular location is the cytosol. It carries out the reaction S-ubiquitinyl-[E2 ubiquitin-conjugating enzyme]-L-cysteine + [acceptor protein]-L-lysine = [E2 ubiquitin-conjugating enzyme]-L-cysteine + N(6)-ubiquitinyl-[acceptor protein]-L-lysine.. Its pathway is protein modification; protein ubiquitination. E3 ubiquitin-protein ligase component of the ribosome quality control complex (RQC), a ribosome-associated complex that mediates ubiquitination and extraction of incompletely synthesized nascent chains for proteasomal degradation. Mediates ubiquitination of proteins derived from mRNAs lacking stop codons (non-stop proteins) and other translation arrest products induced by poly-lysine sequences and tandem rare codons. Ubiquitination leads to cdc48 recruitment for extraction and degradation of the incomplete translation product. May indirectly play a role in chromatin function and transcription. This is E3 ubiquitin-protein ligase listerin from Schizosaccharomyces pombe (strain 972 / ATCC 24843) (Fission yeast).